Here is a 239-residue protein sequence, read N- to C-terminus: 6-phosphogluconolactonase (239 aa).

It belongs to the glucosamine/galactosamine-6-phosphate isomerase family. 6-phosphogluconolactonase subfamily.

The catalysed reaction is 6-phospho-D-glucono-1,5-lactone + H2O = 6-phospho-D-gluconate + H(+). It functions in the pathway carbohydrate degradation; pentose phosphate pathway; D-ribulose 5-phosphate from D-glucose 6-phosphate (oxidative stage): step 2/3. In terms of biological role, hydrolysis of 6-phosphogluconolactone to 6-phosphogluconate. The protein is 6-phosphogluconolactonase (pgl) of Xylella fastidiosa (strain Temecula1 / ATCC 700964).